A 55-amino-acid polypeptide reads, in one-letter code: uncharacterized protein (55 aa).

Residues 24 to 46 form a helical membrane-spanning segment; the sequence is LFIIFFTYSYYYCGFLQSFNYII.

Its subcellular location is the membrane. This is an uncharacterized protein from Dictyostelium discoideum (Social amoeba).